The following is a 216-amino-acid chain: Small ribosomal subunit protein uS3c (216 aa).

The 76-residue stretch at Ile-43 to Thr-118 folds into the KH type-2 domain.

It belongs to the universal ribosomal protein uS3 family. Part of the 30S ribosomal subunit.

It is found in the plastid. Its subcellular location is the chloroplast. This chain is Small ribosomal subunit protein uS3c (rps3), found in Eucalyptus globulus subsp. globulus (Tasmanian blue gum).